The primary structure comprises 206 residues: MAANKNKNQSSLALHKVIMVGSGGVGKSALTLQFMYDEFVEDYEPTKADSYRKKVVLDGEEVQIDILDTAGQEDYAAIRDNYFRSGEGFLCVFSITEQESFTATVEFREQILRVKAEEDKIPLLLVGNKSDLEDRRQVSIEEARSKAEEWGVQYVETSAKTRANVDKVFFDLMREVRAKKMSENKDKNGKKSSRNKKSLRERCCIL.

21-28 provides a ligand contact to GTP; sequence GSGGVGKS. Positions 43–51 match the Effector region motif; sequence YEPTKADSY. GTP is bound by residues 68–72 and 128–131; these read DTAGQ and NKSD. Over residues 180–189 the composition is skewed to basic and acidic residues; sequence KMSENKDKNG. The disordered stretch occupies residues 180–206; it reads KMSENKDKNGKKSSRNKKSLRERCCIL. Position 203 is a cysteine methyl ester (Cys203). Cys203 carries S-geranylgeranyl cysteine lipidation. The propeptide at 204–206 is removed in mature form; the sequence is CIL.

This sequence belongs to the small GTPase superfamily. Ras family.

Its subcellular location is the cell membrane. It carries out the reaction GTP + H2O = GDP + phosphate + H(+). The polypeptide is Ras-related protein O-RAL (Diplobatis ommata (Ocellated electric ray)).